A 374-amino-acid polypeptide reads, in one-letter code: MVFLNSSPFKGRLLFFVYLLIISTRLVAADMNTQYGCYLVDSSLTEQGTFTYLDPAYCYNNICGGSDNIAFVAIRNNQCYCGSTLTATEVSSSLCTTPCPGYGSLMCGGDLYWSVYLTGNGVLQTTVSSSSVSSTTSSSSSSSPSSSSTTTTTSPSSSSSSSSSSSSSSSSSSSSSSSSSSSSSSSSSSSSSSSSSSSSSSSSSSSSVPITSSTSSSHSSSSSSSSSSSSSSRPSSSSSFITTMSSSTFISTVTVTPSSSSSSTSSEVPSSTAALALNASKASNHTSLNAGAIVGIVIGCVAFAVVMALCIFLYFYFRRFKIRMSDSANEGKYPSYASELDSRLDPAMMNRKSSESLADSQDYSRKILRVTNLN.

The first 29 residues, 1-29 (MVFLNSSPFKGRLLFFVYLLIISTRLVAA), serve as a signal peptide directing secretion. The Extracellular portion of the chain corresponds to 30 to 292 (DMNTQYGCYL…SNHTSLNAGA (263 aa)). Positions 31–119 (MNTQYGCYLV…DLYWSVYLTG (89 aa)) constitute a WSC domain. The tract at residues 132–236 (VSSTTSSSSS…SSSSSSRPSS (105 aa)) is disordered. Residues N278 and N284 are each glycosylated (N-linked (GlcNAc...) asparagine). The chain crosses the membrane as a helical span at residues 293–313 (IVGIVIGCVAFAVVMALCIFL). The Cytoplasmic portion of the chain corresponds to 314 to 374 (YFYFRRFKIR…RKILRVTNLN (61 aa)). The residue at position 354 (S354) is a Phosphoserine.

In terms of processing, O-mannosylated.

It localises to the membrane. The protein is Cell wall integrity and stress response component 1 (wsc1) of Schizosaccharomyces pombe (strain 972 / ATCC 24843) (Fission yeast).